The chain runs to 438 residues: Xylose isomerase (438 aa).

Catalysis depends on residues His100 and Asp103. Residues Glu231, Glu267, His270, Asp295, Asp306, Asp308, and Asp338 each contribute to the Mg(2+) site.

It belongs to the xylose isomerase family. As to quaternary structure, homotetramer. Requires Mg(2+) as cofactor.

The protein localises to the cytoplasm. The enzyme catalyses alpha-D-xylose = alpha-D-xylulofuranose. The sequence is that of Xylose isomerase from Pseudomonas fluorescens (strain Pf0-1).